A 509-amino-acid polypeptide reads, in one-letter code: ATP synthase subunit alpha, mitochondrial (509 aa).

An ATP-binding site is contributed by 171–178; the sequence is GDRQTGKT.

This sequence belongs to the ATPase alpha/beta chains family. In terms of assembly, F-type ATPases have 2 components, CF(1) - the catalytic core - and CF(0) - the membrane proton channel. CF(1) has five subunits: alpha(3), beta(3), gamma(1), delta(1), epsilon(1). CF(0) has three main subunits: a, b and c.

Its subcellular location is the mitochondrion. It is found in the mitochondrion inner membrane. Mitochondrial membrane ATP synthase (F(1)F(0) ATP synthase or Complex V) produces ATP from ADP in the presence of a proton gradient across the membrane which is generated by electron transport complexes of the respiratory chain. F-type ATPases consist of two structural domains, F(1) - containing the extramembraneous catalytic core, and F(0) - containing the membrane proton channel, linked together by a central stalk and a peripheral stalk. During catalysis, ATP synthesis in the catalytic domain of F(1) is coupled via a rotary mechanism of the central stalk subunits to proton translocation. Subunits alpha and beta form the catalytic core in F(1). Rotation of the central stalk against the surrounding alpha(3)beta(3) subunits leads to hydrolysis of ATP in three separate catalytic sites on the beta subunits. Subunit alpha does not bear the catalytic high-affinity ATP-binding sites. This Triticum aestivum (Wheat) protein is ATP synthase subunit alpha, mitochondrial (ATPA).